Reading from the N-terminus, the 500-residue chain is Glycerol kinase (500 aa).

T15 is an ADP binding site. T15, T16, and S17 together coordinate ATP. Residue T15 coordinates sn-glycerol 3-phosphate. R19 provides a ligand contact to ADP. R85, E86, Y137, and D245 together coordinate sn-glycerol 3-phosphate. Residues R85, E86, Y137, D245, and Q246 each coordinate glycerol. ADP is bound by residues T267 and G310. 4 residues coordinate ATP: T267, G310, Q314, and G411. ADP contacts are provided by G411 and N415.

Belongs to the FGGY kinase family.

It carries out the reaction glycerol + ATP = sn-glycerol 3-phosphate + ADP + H(+). It functions in the pathway polyol metabolism; glycerol degradation via glycerol kinase pathway; sn-glycerol 3-phosphate from glycerol: step 1/1. Inhibited by fructose 1,6-bisphosphate (FBP). Its function is as follows. Key enzyme in the regulation of glycerol uptake and metabolism. Catalyzes the phosphorylation of glycerol to yield sn-glycerol 3-phosphate. In Aeromonas salmonicida (strain A449), this protein is Glycerol kinase.